The following is a 720-amino-acid chain: 1,4-alpha-glucan branching enzyme GlgB (720 aa).

The Nucleophile role is filled by D400. E453 acts as the Proton donor in catalysis.

This sequence belongs to the glycosyl hydrolase 13 family. GlgB subfamily. Monomer.

It catalyses the reaction Transfers a segment of a (1-&gt;4)-alpha-D-glucan chain to a primary hydroxy group in a similar glucan chain.. Its pathway is glycan biosynthesis; glycogen biosynthesis. Its function is as follows. Catalyzes the formation of the alpha-1,6-glucosidic linkages in glycogen by scission of a 1,4-alpha-linked oligosaccharide from growing alpha-1,4-glucan chains and the subsequent attachment of the oligosaccharide to the alpha-1,6 position. This Chlamydia pneumoniae (Chlamydophila pneumoniae) protein is 1,4-alpha-glucan branching enzyme GlgB.